We begin with the raw amino-acid sequence, 466 residues long: MTINIYNTLTRKKEEFVPLEPGKVKMYVCGPTVYNYIHIGNARPAIVYDTVRKYLEYSGYDVNFVSNFTDVDDKLIKAANELGEDVPTIADRFIQAYFEDVSALGCKKADLHPRVTENMDDIIAFIETLIEKGYAYEADGDVYYSTRSFEGYGKLSHQSIDELKTGARIRVGEKKRDALDFALWKAAKNQEISWDSPWGEGRPGWHIECSAMVKKYLGDTIDIHAGGQDLTFPHHENEIAQSEALTGKPFAKYWMHNGYINIENEKMSKSLGNFVLVHDIVKEQDPDVLRFFMLSVHYRHPINYSMDLLESTKSAFNRLKTSYANLHHRLESSTNITEDNAKWLAKVEEQRATFISEMNDDFNTANAISVLFELAKQANYYMENDHTSEEVIKAFIGLFQEITSVLGFSLEEKHTLEKEVEALIEQRNEARRNRDFALSDQIRDQLKSMNIVLEDTPQGTRWKRGE.

C29 is a binding site for Zn(2+). The short motif at 31-41 (PTVYNYIHIGN) is the 'HIGH' region element. C209, H234, and E238 together coordinate Zn(2+). A 'KMSKS' region motif is present at residues 266-270 (KMSKS). K269 is a binding site for ATP. S270 carries the phosphoserine modification.

The protein belongs to the class-I aminoacyl-tRNA synthetase family. In terms of assembly, monomer. The cofactor is Zn(2+).

It localises to the cytoplasm. It catalyses the reaction tRNA(Cys) + L-cysteine + ATP = L-cysteinyl-tRNA(Cys) + AMP + diphosphate. The sequence is that of Cysteine--tRNA ligase from Bacillus pumilus (strain SAFR-032).